The chain runs to 309 residues: Methionyl-tRNA formyltransferase (309 aa).

109 to 112 (SLLP) contacts (6S)-5,6,7,8-tetrahydrofolate.

It belongs to the Fmt family.

It catalyses the reaction L-methionyl-tRNA(fMet) + (6R)-10-formyltetrahydrofolate = N-formyl-L-methionyl-tRNA(fMet) + (6S)-5,6,7,8-tetrahydrofolate + H(+). Functionally, attaches a formyl group to the free amino group of methionyl-tRNA(fMet). The formyl group appears to play a dual role in the initiator identity of N-formylmethionyl-tRNA by promoting its recognition by IF2 and preventing the misappropriation of this tRNA by the elongation apparatus. This chain is Methionyl-tRNA formyltransferase, found in Clostridium novyi (strain NT).